Consider the following 330-residue polypeptide: 1,8-cineole synthase (330 aa).

Asp81 provides a ligand contact to Mg(2+). The DDXXD motif signature appears at 81-85 (DDHFD). Position 174 (Arg174) interacts with substrate. Mg(2+) is bound by residues Asn220 and Ser224. The NXXXSXXXE motif motif lies at 220–228 (NDVLSLEKE). Lys227 is a binding site for substrate. Glu228 contributes to the Mg(2+) binding site. Substrate is bound at residue 314-315 (RY).

Belongs to the terpene synthase family. As to quaternary structure, homodimer. Requires Mg(2+) as cofactor.

It catalyses the reaction (2E)-geranyl diphosphate + H2O = 1,8-cineole + diphosphate. The catalysed reaction is neryl diphosphate + H2O = 1,8-cineole + diphosphate. In terms of biological role, in vitro, catalyzes the formation of 1,8-cineole from geranyl diphosphate (GPP). Can also accept neryl diphosphate (NPP) as substrate to produce 1,8-cineole. This is 1,8-cineole synthase from Streptomyces clavuligerus.